Consider the following 243-residue polypeptide: Transmembrane protein 174 (243 aa).

Transmembrane regions (helical) follow at residues 40 to 60 (LLFS…MGWI) and 73 to 93 (LLGP…VCKF).

In terms of assembly, interacts with SLC34A1; regulates SLC34A1 internalization by PTH and FGF23. As to expression, kidney specific. Expressed in renal primary proximal tubule cells.

The protein resides in the endoplasmic reticulum membrane. The protein localises to the apical cell membrane. In terms of biological role, regulator of plasma phosphate homeostasis. Decreases serum inorganic phosphate (Pi) uptake by regulating the sodium-phosphate cotransporter SLC34A1 trafficking by PTH and FGF23 in the kidney. This chain is Transmembrane protein 174 (Tmem174), found in Mus musculus (Mouse).